The chain runs to 374 residues: MEILRIEPTPSPNTMKVVLSYTREDKLSNTYKKVEETQPRFINQLLSIDGITSIFHVMNFLAVDKAPKADWEVILPDIKAAFSDANKVLESVNEPQIDNHFGEIKAELLTFKGIPYQIKLTSADQELREQLPQTYVDHMTQAQTAHDNIVFMRKWLDLGNRYGNIQEVMDGVLEEVLATYPESQLPVLVKHALEENHATNNYHFYRHVSLDEYHATDNWKTRLRMLNHFPKPTFEDIPLLDLALSDEKVPVRRQAIVLLGMIESKEILPYLYKGLRDKSPAVRRTAGDCISDLGYPEALPEMVLLLDDPQKIVRWRAAMFIFDEGNAEQLPALKAHINDNAFEVKLQIEMAISRIENGDEALGSVWKQMANRTI.

The protein belongs to the CvfC family.

In terms of biological role, required for hemolysin production. Contributes to virulence in both silkworm-infection model and mice. The sequence is that of Conserved virulence factor C (cvfC) from Staphylococcus aureus (strain NCTC 8325 / PS 47).